A 94-amino-acid chain; its full sequence is uncharacterized protein (94 aa).

The signal sequence occupies residues 1-26 (MNDQRDQAVPWATGLAVAGFVAAVIA). 2 helical membrane passes run 42 to 62 (LLAV…LWGW) and 71 to 91 (FVLG…ALTL).

Its subcellular location is the cell membrane. This is an uncharacterized protein from Mycobacterium tuberculosis (strain CDC 1551 / Oshkosh).